A 166-amino-acid polypeptide reads, in one-letter code: Large ribosomal subunit protein uL10 (166 aa).

It belongs to the universal ribosomal protein uL10 family. In terms of assembly, part of the ribosomal stalk of the 50S ribosomal subunit. The N-terminus interacts with L11 and the large rRNA to form the base of the stalk. The C-terminus forms an elongated spine to which L12 dimers bind in a sequential fashion forming a multimeric L10(L12)X complex.

Its function is as follows. Forms part of the ribosomal stalk, playing a central role in the interaction of the ribosome with GTP-bound translation factors. The chain is Large ribosomal subunit protein uL10 from Streptococcus pneumoniae serotype 19F (strain G54).